The sequence spans 182 residues: ADP-ribosylation factor-like protein 11 (182 aa).

Gly-2 carries N-myristoyl glycine lipidation. Residues 19 to 26 (GLDSAGKT), 63 to 67 (DVGGQ), and 122 to 125 (NKQE) each bind GTP.

Belongs to the small GTPase superfamily. Arf family.

Its function is as follows. May play a role in apoptosis. May act as a tumor suppressor. The chain is ADP-ribosylation factor-like protein 11 (ARL11) from Bos taurus (Bovine).